Consider the following 1088-residue polypeptide: Neural cell adhesion molecule 1-A (1088 aa).

Residues 1–19 form the signal peptide; it reads MLHIKDLIWTLYFIGTAVA. 5 Ig-like C2-type domains span residues 20-108, 113-202, 209-294, 303-397, and 400-484; these read LEVN…GTVN, QKLT…KDIQ, PTIQ…AEAT, PKIT…FEVQ, and PKIR…HEFS. Residues 20 to 705 are Extracellular-facing; the sequence is LEVNIVPDQG…TASAGTGLGT (686 aa). Disulfide bonds link Cys-41–Cys-93 and Cys-136–Cys-186. A glycan (N-linked (GlcNAc...) asparagine) is linked at Asn-82. Heparin-binding positions include 149 to 153 and 158 to 162; these read RHKGK and KKDVR. An N-linked (GlcNAc...) asparagine glycan is attached at Asn-219. Cys-232 and Cys-282 form a disulfide bridge. N-linked (GlcNAc...) asparagine glycans are attached at residues Asn-310, Asn-341, Asn-417, Asn-443, and Asn-472. Cys-323 and Cys-379 form a disulfide bridge. Cys-420 and Cys-473 form a disulfide bridge. Fibronectin type-III domains lie at 493–592 and 594–690; these read TPSS…TQPV and EPSA…TAKP. A helical membrane pass occupies residues 706–723; sequence GAIVGILIVIFVLLLVVV. At 724–1088 the chain is on the cytoplasmic side; the sequence is DVTCFFLNKC…TQTNANESKA (365 aa). Basic and acidic residues predominate over residues 758–784; that stretch reads EGKAAFSKDESKEPIVEVRTEEERTPN. 3 disordered regions span residues 758-802, 829-1000, and 1024-1088; these read EGKA…LTEP, FATA…DGGT, and VASG…ESKA. 3 stretches are compositionally biased toward low complexity: residues 835 to 847, 854 to 875, and 913 to 936; these read SPTSETTTLTSST, APDSNTIQSIQATPSKAEAPTT, and PSAATSAAEPPTVIIKPVTTVPPN. Over residues 965 to 974 the composition is skewed to polar residues; it reads QPSTVKNPTE. Over residues 1046 to 1064 the composition is skewed to basic and acidic residues; the sequence is AKTEKTQVEEKSKPEEIDV. Residues 1076–1088 show a composition bias toward polar residues; it reads NEATQTNANESKA.

Post-translationally, polysialylated by ST8SIA2 and ST8SIA4. Polysialylation modulates cell interactions by confering both attractive and repulsive properties that are highly regulated by ST8SIA2 and ST8SIA4. Polysialylation is formed on a-2,3-linked sialic acid of core glycans. As to expression, expressed in neuron and in presumptive neural tissue.

The protein resides in the cell membrane. Its function is as follows. This protein is a cell adhesion molecule involved in neuron-neuron adhesion, neurite fasciculation, outgrowth of neurites, etc. This Xenopus laevis (African clawed frog) protein is Neural cell adhesion molecule 1-A.